Here is a 422-residue protein sequence, read N- to C-terminus: 3-phosphoshikimate 1-carboxyvinyltransferase (422 aa).

Positions 20, 21, and 25 each coordinate 3-phosphoshikimate. K20 contacts phosphoenolpyruvate. 2 residues coordinate phosphoenolpyruvate: G90 and R118. 3-phosphoshikimate is bound by residues S163, S164, Q165, S191, D306, and K333. Q165 serves as a coordination point for phosphoenolpyruvate. D306 serves as the catalytic Proton acceptor. Phosphoenolpyruvate contacts are provided by R337 and R378.

The protein belongs to the EPSP synthase family. In terms of assembly, monomer.

It is found in the cytoplasm. The catalysed reaction is 3-phosphoshikimate + phosphoenolpyruvate = 5-O-(1-carboxyvinyl)-3-phosphoshikimate + phosphate. It functions in the pathway metabolic intermediate biosynthesis; chorismate biosynthesis. In terms of biological role, catalyzes the transfer of the enolpyruvyl moiety of phosphoenolpyruvate (PEP) to the 5-hydroxyl of shikimate-3-phosphate (S3P) to produce enolpyruvyl shikimate-3-phosphate and inorganic phosphate. In Methanocella arvoryzae (strain DSM 22066 / NBRC 105507 / MRE50), this protein is 3-phosphoshikimate 1-carboxyvinyltransferase.